An 89-amino-acid chain; its full sequence is Venom peptide BmKAPI (89 aa).

Positions 1–22 (MKFVFASFALFVIFLCFSQSLS) are cleaved as a signal peptide. 5 disulfides stabilise this stretch: Cys28–Cys66, Cys37–Cys62, Cys41–Cys55, Cys46–Cys86, and Cys68–Cys80. The region spanning 28-86 (CRDNEVFDNCISNCGPPRCSNILNTYPCTNLGPLCTPGCKCKDGRVYDNQGRCVLQTEC) is the TIL domain.

This sequence belongs to the serine protease inhibitor-like (TIL domain-containing) family. Expressed by the venom gland.

Its subcellular location is the secreted. Functionally, serine protease inhibitor. This Olivierus martensii (Manchurian scorpion) protein is Venom peptide BmKAPI.